Reading from the N-terminus, the 158-residue chain is Ribosomal RNA large subunit methyltransferase H (158 aa).

S-adenosyl-L-methionine-binding positions include Leu72, Gly103, and 122 to 127 (LGNLTL).

It belongs to the RNA methyltransferase RlmH family. Homodimer.

It localises to the cytoplasm. The enzyme catalyses pseudouridine(1915) in 23S rRNA + S-adenosyl-L-methionine = N(3)-methylpseudouridine(1915) in 23S rRNA + S-adenosyl-L-homocysteine + H(+). Its function is as follows. Specifically methylates the pseudouridine at position 1915 (m3Psi1915) in 23S rRNA. This chain is Ribosomal RNA large subunit methyltransferase H, found in Acidiphilium cryptum (strain JF-5).